Here is a 596-residue protein sequence, read N- to C-terminus: Myosin light chain kinase 2, skeletal/cardiac muscle (596 aa).

A disordered region spans residues 1–224; it reads MATENGAVEL…AGQAKMQGDT (224 aa). Ala-2 carries the N-acetylalanine modification. Over residues 40–63 the composition is skewed to basic and acidic residues; sequence DPKKAPDPPTLKKDAKAPASEKGD. Low complexity predominate over residues 88–104; it reads EGSAGPPAALPQQTATP. 3 positions are modified to phosphoserine: Ser-143, Ser-149, and Ser-151. Residues 189–209 show a composition bias toward basic and acidic residues; sequence RPAKAEEGKNILAESQKEVGE. Residues 285–540 form the Protein kinase domain; it reads MNSKEALGGG…AAQCLAHPWL (256 aa). ATP-binding positions include 291 to 299 and Lys-314; that span reads LGGGKFGAV. Asp-406 serves as the catalytic Proton acceptor. The residue at position 445 (Thr-445) is a Phosphothreonine. A calmodulin-binding region spans residues 574–586; it reads IAVSAANRFKKIS.

Belongs to the protein kinase superfamily. CAMK Ser/Thr protein kinase family. In terms of assembly, may interact with centrin. In terms of tissue distribution, heart and skeletal muscles. Increased expression in the apical tissue compared to the interventricular septal tissue.

The protein localises to the cytoplasm. It carries out the reaction L-seryl-[myosin light chain] + ATP = O-phospho-L-seryl-[myosin light chain] + ADP + H(+). The enzyme catalyses L-threonyl-[myosin light chain] + ATP = O-phospho-L-threonyl-[myosin light chain] + ADP + H(+). Its function is as follows. Implicated in the level of global muscle contraction and cardiac function. Phosphorylates a specific serine in the N-terminus of a myosin light chain. This Homo sapiens (Human) protein is Myosin light chain kinase 2, skeletal/cardiac muscle (MYLK2).